Here is a 210-residue protein sequence, read N- to C-terminus: Uracil phosphoribosyltransferase (210 aa).

Residues Arg78, Arg103, and 130 to 138 contribute to the 5-phospho-alpha-D-ribose 1-diphosphate site; that span reads DPMLATGGT. Uracil is bound by residues Ile193 and 198 to 200; that span reads GDA. Asp199 is a binding site for 5-phospho-alpha-D-ribose 1-diphosphate.

This sequence belongs to the UPRTase family. Mg(2+) is required as a cofactor.

It carries out the reaction UMP + diphosphate = 5-phospho-alpha-D-ribose 1-diphosphate + uracil. It functions in the pathway pyrimidine metabolism; UMP biosynthesis via salvage pathway; UMP from uracil: step 1/1. Allosterically activated by GTP. In terms of biological role, catalyzes the conversion of uracil and 5-phospho-alpha-D-ribose 1-diphosphate (PRPP) to UMP and diphosphate. The polypeptide is Uracil phosphoribosyltransferase (Stenotrophomonas maltophilia (strain R551-3)).